The sequence spans 74 residues: NADH dehydrogenase [ubiquinone] 1 alpha subcomplex assembly factor 8 (74 aa).

Positions 22-69 (LAACGAEASAYGKCVQASTAPGGRLSKDLCVREFEALRSCFAAAAKKT) constitute a CHCH domain. 2 consecutive short sequence motifs (cx9C motif) follow at residues 25-35 (CGAEASAYGKC) and 51-61 (CVREFEALRSC). Disulfide bonds link Cys25-Cys61 and Cys35-Cys51.

Interacts with NDUFAF5.

Its subcellular location is the mitochondrion. Its function is as follows. Involved in the assembly of mitochondrial NADH:ubiquinone oxidoreductase complex (complex I, MT-ND1). Required to stabilize NDUFAF5. The chain is NADH dehydrogenase [ubiquinone] 1 alpha subcomplex assembly factor 8 from Mus musculus (Mouse).